Here is a 422-residue protein sequence, read N- to C-terminus: Serine hydroxymethyltransferase (422 aa).

(6S)-5,6,7,8-tetrahydrofolate-binding positions include L118 and 122–124; that span reads GHL. Position 227 is an N6-(pyridoxal phosphate)lysine (K227). Residues E243 and 351–353 contribute to the (6S)-5,6,7,8-tetrahydrofolate site; that span reads SPF.

The protein belongs to the SHMT family. In terms of assembly, homodimer. The cofactor is pyridoxal 5'-phosphate.

Its subcellular location is the cytoplasm. The enzyme catalyses (6R)-5,10-methylene-5,6,7,8-tetrahydrofolate + glycine + H2O = (6S)-5,6,7,8-tetrahydrofolate + L-serine. The protein operates within one-carbon metabolism; tetrahydrofolate interconversion. It functions in the pathway amino-acid biosynthesis; glycine biosynthesis; glycine from L-serine: step 1/1. Catalyzes the reversible interconversion of serine and glycine with tetrahydrofolate (THF) serving as the one-carbon carrier. This reaction serves as the major source of one-carbon groups required for the biosynthesis of purines, thymidylate, methionine, and other important biomolecules. Also exhibits THF-independent aldolase activity toward beta-hydroxyamino acids, producing glycine and aldehydes, via a retro-aldol mechanism. This is Serine hydroxymethyltransferase from Fervidobacterium nodosum (strain ATCC 35602 / DSM 5306 / Rt17-B1).